The primary structure comprises 314 residues: MIIFNLSSYNPGPFILVGIPGLEQFHVWIGIPFCIIYIVAVVGNCILLYLIVVEHSLHEPMFFFLSMLAMTDLILSTAGVPKALSIFWLGAREITFPGCLTQMFFLHYNFVLDSAILMAMAFDHYVAICSPLRYTTILTPKTIIKSAMGISFRSFCIILPDVFLLTCLPFCRTRIIPHTYCEHIGVAQLACADISINFWYGFCVPIMTVISDVILIAVSYAHILCAVFGLPSQDACQKALGTCGSHVCVILMFYTPAFFSILAHRFGHNVSRTFHIMFANLYIVIPPALNPMVYGVKTKQIRDKVILLFSKGTG.

Residues 1 to 32 are Extracellular-facing; sequence MIIFNLSSYNPGPFILVGIPGLEQFHVWIGIP. Residue Asn-5 is glycosylated (N-linked (GlcNAc...) asparagine). The helical transmembrane segment at 33–53 threads the bilayer; sequence FCIIYIVAVVGNCILLYLIVV. Residues 54-59 lie on the Cytoplasmic side of the membrane; it reads EHSLHE. Residues 60 to 80 form a helical membrane-spanning segment; sequence PMFFFLSMLAMTDLILSTAGV. Over 81-101 the chain is Extracellular; it reads PKALSIFWLGAREITFPGCLT. A disulfide bridge connects residues Cys-99 and Cys-181. Residues 102–122 form a helical membrane-spanning segment; it reads QMFFLHYNFVLDSAILMAMAF. Topologically, residues 123 to 149 are cytoplasmic; the sequence is DHYVAICSPLRYTTILTPKTIIKSAMG. The helical transmembrane segment at 150 to 170 threads the bilayer; that stretch reads ISFRSFCIILPDVFLLTCLPF. Topologically, residues 171–197 are extracellular; sequence CRTRIIPHTYCEHIGVAQLACADISIN. Residues 198-218 traverse the membrane as a helical segment; it reads FWYGFCVPIMTVISDVILIAV. Residues 219–242 lie on the Cytoplasmic side of the membrane; that stretch reads SYAHILCAVFGLPSQDACQKALGT. A helical membrane pass occupies residues 243 to 263; sequence CGSHVCVILMFYTPAFFSILA. The Extracellular segment spans residues 264-275; the sequence is HRFGHNVSRTFH. Asn-269 carries an N-linked (GlcNAc...) asparagine glycan. The chain crosses the membrane as a helical span at residues 276–296; sequence IMFANLYIVIPPALNPMVYGV. At 297–314 the chain is on the cytoplasmic side; sequence KTKQIRDKVILLFSKGTG.

The protein belongs to the G-protein coupled receptor 1 family.

It localises to the membrane. In terms of biological role, odorant receptor. This Homo sapiens (Human) protein is Olfactory receptor 52H1 (OR52H1).